The sequence spans 416 residues: Histidine--tRNA ligase (416 aa).

It belongs to the class-II aminoacyl-tRNA synthetase family. As to quaternary structure, homodimer.

It localises to the cytoplasm. The catalysed reaction is tRNA(His) + L-histidine + ATP = L-histidyl-tRNA(His) + AMP + diphosphate + H(+). This chain is Histidine--tRNA ligase, found in Dictyoglomus thermophilum (strain ATCC 35947 / DSM 3960 / H-6-12).